A 35-amino-acid polypeptide reads, in one-letter code: uncharacterized protein (35 aa).

The chain crosses the membrane as a helical span at residues 14-34; it reads LAHLIGIIYLIIILGTLVMLF.

The protein resides in the endoplasmic reticulum membrane. This is an uncharacterized protein from Saccharomyces cerevisiae (strain ATCC 204508 / S288c) (Baker's yeast).